A 154-amino-acid polypeptide reads, in one-letter code: MATFSQKPAEVVKKWVLIDAEGLVLGRLATIVANRLRGKHKATFTPHVDDGDNVVIINADKVVLTGKKYTDKVYYWHTGHPGGIKERTARQILEGRFPERVVEKAIERMIPRGPLGRRQMKNLRVYAGPNHQQEAQQPEVLDVAALNRKNKGNA.

Belongs to the universal ribosomal protein uL13 family. Part of the 50S ribosomal subunit.

In terms of biological role, this protein is one of the early assembly proteins of the 50S ribosomal subunit, although it is not seen to bind rRNA by itself. It is important during the early stages of 50S assembly. This chain is Large ribosomal subunit protein uL13, found in Brucella anthropi (strain ATCC 49188 / DSM 6882 / CCUG 24695 / JCM 21032 / LMG 3331 / NBRC 15819 / NCTC 12168 / Alc 37) (Ochrobactrum anthropi).